The chain runs to 488 residues: Probable cytosol aminopeptidase (488 aa).

Lys254 and Asp259 together coordinate Mn(2+). Lys266 is a catalytic residue. The Mn(2+) site is built by Asp277, Asp336, and Glu338. Arg340 is a catalytic residue.

Belongs to the peptidase M17 family. It depends on Mn(2+) as a cofactor.

The protein localises to the cytoplasm. The catalysed reaction is Release of an N-terminal amino acid, Xaa-|-Yaa-, in which Xaa is preferably Leu, but may be other amino acids including Pro although not Arg or Lys, and Yaa may be Pro. Amino acid amides and methyl esters are also readily hydrolyzed, but rates on arylamides are exceedingly low.. The enzyme catalyses Release of an N-terminal amino acid, preferentially leucine, but not glutamic or aspartic acids.. Its function is as follows. Presumably involved in the processing and regular turnover of intracellular proteins. Catalyzes the removal of unsubstituted N-terminal amino acids from various peptides. The chain is Probable cytosol aminopeptidase from Roseiflexus castenholzii (strain DSM 13941 / HLO8).